Consider the following 336-residue polypeptide: Holliday junction branch migration complex subunit RuvB (336 aa).

Residues 1 to 182 (MKERIVNLET…FGMSFRMQFY (182 aa)) are large ATPase domain (RuvB-L). ATP contacts are provided by residues Leu-21, Arg-22, Gly-63, Lys-66, Thr-67, Ser-68, 129–131 (EDF), Arg-172, Tyr-182, and Arg-219. Thr-67 contributes to the Mg(2+) binding site. The small ATPAse domain (RuvB-S) stretch occupies residues 183 to 253 (NPSELALIIK…ITLHALNELG (71 aa)). The interval 256 to 336 (ELGFDEADLA…IPTLNPQTLF (81 aa)) is head domain (RuvB-H). Positions 310 and 315 each coordinate DNA.

It belongs to the RuvB family. As to quaternary structure, homohexamer. Forms an RuvA(8)-RuvB(12)-Holliday junction (HJ) complex. HJ DNA is sandwiched between 2 RuvA tetramers; dsDNA enters through RuvA and exits via RuvB. An RuvB hexamer assembles on each DNA strand where it exits the tetramer. Each RuvB hexamer is contacted by two RuvA subunits (via domain III) on 2 adjacent RuvB subunits; this complex drives branch migration. In the full resolvosome a probable DNA-RuvA(4)-RuvB(12)-RuvC(2) complex forms which resolves the HJ.

The protein localises to the cytoplasm. The catalysed reaction is ATP + H2O = ADP + phosphate + H(+). Its function is as follows. The RuvA-RuvB-RuvC complex processes Holliday junction (HJ) DNA during genetic recombination and DNA repair, while the RuvA-RuvB complex plays an important role in the rescue of blocked DNA replication forks via replication fork reversal (RFR). RuvA specifically binds to HJ cruciform DNA, conferring on it an open structure. The RuvB hexamer acts as an ATP-dependent pump, pulling dsDNA into and through the RuvAB complex. RuvB forms 2 homohexamers on either side of HJ DNA bound by 1 or 2 RuvA tetramers; 4 subunits per hexamer contact DNA at a time. Coordinated motions by a converter formed by DNA-disengaged RuvB subunits stimulates ATP hydrolysis and nucleotide exchange. Immobilization of the converter enables RuvB to convert the ATP-contained energy into a lever motion, pulling 2 nucleotides of DNA out of the RuvA tetramer per ATP hydrolyzed, thus driving DNA branch migration. The RuvB motors rotate together with the DNA substrate, which together with the progressing nucleotide cycle form the mechanistic basis for DNA recombination by continuous HJ branch migration. Branch migration allows RuvC to scan DNA until it finds its consensus sequence, where it cleaves and resolves cruciform DNA. The chain is Holliday junction branch migration complex subunit RuvB from Helicobacter pylori (strain ATCC 700392 / 26695) (Campylobacter pylori).